The primary structure comprises 66 residues: Large ribosomal subunit protein eL29 (66 aa).

The span at methionine 1–serine 14 shows a compositional bias: polar residues. The segment at methionine 1–glutamate 66 is disordered. Residues lysine 15–serine 31 show a composition bias toward basic residues. Over residues isoleucine 47 to glutamate 66 the composition is skewed to basic and acidic residues.

The protein belongs to the eukaryotic ribosomal protein eL29 family.

The protein resides in the cytoplasm. This Tetrahymena thermophila protein is Large ribosomal subunit protein eL29 (RPL29).